Consider the following 833-residue polypeptide: V-type proton ATPase 116 kDa subunit a 4 (833 aa).

Residues 1 to 390 (MASVFRSEEM…DAYGVGSYRE (390 aa)) are Cytoplasmic-facing. A helical membrane pass occupies residues 391 to 409 (INPAPYTIITFPFLFAVMF). The Vacuolar portion of the chain corresponds to 410 to 411 (GD). Residues 412-428 (CGHGMVMLMAALWMVLN) traverse the membrane as a helical segment. At 429–443 (ERHLLAQKSTNEMWN) the chain is on the cytoplasmic side. The helical transmembrane segment at 444 to 473 (IFFNGRYLILLMGIFSIYTGLIYNDCFSKS) threads the bilayer. Over 474 to 538 (FNIFGSSWSV…ASNKLTFLNS (65 aa)) the chain is Vacuolar. The chain crosses the membrane as a helical span at residues 539–558 (YKMKMSVILGIAHMIFGVIL). At 559–576 (SLFNHIYFRRTLNIILQF) the chain is on the cytoplasmic side. Residues 577-597 (IPEMIFMLSLFGYLVFMIIFK) traverse the membrane as a helical segment. Over 598–642 (WCRYDAHTSRKAPSILIHFIGMFLFDYDDSSNAPLYGHQQEVQTF) the chain is Vacuolar. The helical transmembrane segment at 643–662 (FVIIALVSVPWMLLIKPFVL) threads the bilayer. Over 663 to 720 (RAKHQKSQLQSFTIHEDAVEGDHSGHSSKKTAGAHGMKDGHEEEFNFGDIFVHQAIHT) the chain is Cytoplasmic. A disordered region spans residues 681–700 (VEGDHSGHSSKKTAGAHGMK). Residues 721-745 (IEYCLGCISNTASYLRLWALSLAHA) form a helical membrane-spanning segment. Over 746–766 (ELSEVLWTMVMSIGLRLQGWA) the chain is Vacuolar. The helical transmembrane segment at 767 to 805 (GLVGVFIIFAVFAVLTVAILLVMEGLSAFLHALRLHWVE) threads the bilayer. At 806–833 (FQNKFYEGAGSKFSPFSFKHVLEGTAEE) the chain is on the cytoplasmic side.

Belongs to the V-ATPase 116 kDa subunit family. As to quaternary structure, V-ATPase is a heteromultimeric enzyme made up of two complexes: the ATP-hydrolytic V1 complex and the proton translocation V0 complex. The V1 complex consists of three catalytic AB heterodimers that form a heterohexamer, three peripheral stalks each consisting of EG heterodimers, one central rotor including subunits D and F, and the regulatory subunits C and H. The proton translocation complex V0 consists of the proton transport subunit a, a ring of proteolipid subunits c9c'', rotary subunit d, subunits e and f, and the accessory subunits ATP6AP1/Ac45 and ATP6AP2/PRR. Interacts with the V1 complex V-ATPase subunit A ATP6V1A. Interacts with the V0 complex V-ATPase subunit c ATP6V0C. As to expression, specifically expressed in kidney, but not in the heart, brain, spleen, lung, liver, muscle, or testis. Distribution within the kidney appears more widespread than that seen in man. High intensity staining at the surface of intercalated cells, with additional expression in the proximal tubule.

It is found in the apical cell membrane. Its subcellular location is the basolateral cell membrane. Subunit of the V0 complex of vacuolar(H+)-ATPase (V-ATPase), a multisubunit enzyme composed of a peripheral complex (V1) that hydrolyzes ATP and a membrane integral complex (V0) that translocates protons. V-ATPase is responsible for acidifying and maintaining the pH of intracellular compartments and in some cell types, is targeted to the plasma membrane, where it is responsible for acidifying the extracellular environment. Involved in normal vectorial acid transport into the urine by the kidney. In Mus musculus (Mouse), this protein is V-type proton ATPase 116 kDa subunit a 4 (Atp6v0a4).